A 623-amino-acid chain; its full sequence is Glutathione import ATP-binding protein GsiA (623 aa).

ABC transporter domains are found at residues 15–269 (VENL…RALL) and 314–564 (LRVR…RKLL). ATP contacts are provided by residues 49 to 56 (GESGSGKS) and 357 to 364 (GESGSGKS).

This sequence belongs to the ABC transporter superfamily. Glutathione importer (TC 3.A.1.5.11) family. In terms of assembly, the complex is composed of two ATP-binding proteins (GsiA), two transmembrane proteins (GsiC and GsiD) and a solute-binding protein (GsiB).

It is found in the cell inner membrane. It catalyses the reaction glutathione(out) + ATP + H2O = glutathione(in) + ADP + phosphate + H(+). Its activity is regulated as follows. Inhibited by verapamil but not by carbonyl cyanide m-chlorophenylhydrazone (CCCP). Its function is as follows. Part of the ABC transporter complex GsiABCD involved in glutathione import. Responsible for energy coupling to the transport system. This is Glutathione import ATP-binding protein GsiA from Escherichia coli (strain K12).